The primary structure comprises 447 residues: Na(+)-translocating NADH-quinone reductase subunit A (447 aa).

The protein belongs to the NqrA family. In terms of assembly, composed of six subunits; NqrA, NqrB, NqrC, NqrD, NqrE and NqrF.

It catalyses the reaction a ubiquinone + n Na(+)(in) + NADH + H(+) = a ubiquinol + n Na(+)(out) + NAD(+). Its function is as follows. NQR complex catalyzes the reduction of ubiquinone-1 to ubiquinol by two successive reactions, coupled with the transport of Na(+) ions from the cytoplasm to the periplasm. NqrA to NqrE are probably involved in the second step, the conversion of ubisemiquinone to ubiquinol. This is Na(+)-translocating NADH-quinone reductase subunit A from Neisseria meningitidis serogroup A / serotype 4A (strain DSM 15465 / Z2491).